The sequence spans 113 residues: U11-theraphotoxin-Hhn1a (113 aa).

A signal peptide spans 1-21; the sequence is MNTVRVTFLLVFVLAVSLGQA. A propeptide spanning residues 22–74 is cleaved from the precursor; sequence DKDENRMEMQKKTEQGKSYLDFAENLLLQKLEELEAKLLEEDSEESRNSRQKR. Intrachain disulfides connect Cys75–Cys90, Cys82–Cys95, and Cys89–Cys110.

The protein belongs to the neurotoxin 14 (magi-1) family. 01 (HNTX-16) subfamily. Expressed by the venom gland.

It is found in the secreted. Probable ion channel inhibitor. This Cyriopagopus hainanus (Chinese bird spider) protein is U11-theraphotoxin-Hhn1a.